The chain runs to 237 residues: LexA repressor (237 aa).

Positions phenylalanine 26–threonine 46 form a DNA-binding region, H-T-H motif. Catalysis depends on for autocatalytic cleavage activity residues serine 158 and lysine 196.

The protein belongs to the peptidase S24 family. In terms of assembly, homodimer.

The enzyme catalyses Hydrolysis of Ala-|-Gly bond in repressor LexA.. Functionally, represses a number of genes involved in the response to DNA damage (SOS response), including recA and lexA. In the presence of single-stranded DNA, RecA interacts with LexA causing an autocatalytic cleavage which disrupts the DNA-binding part of LexA, leading to derepression of the SOS regulon and eventually DNA repair. This is LexA repressor from Xanthobacter autotrophicus (strain ATCC BAA-1158 / Py2).